A 420-amino-acid chain; its full sequence is D-tagatose-1,6-bisphosphate aldolase subunit GatZ (420 aa).

The protein belongs to the GatZ/KbaZ family. GatZ subfamily. As to quaternary structure, forms a complex with GatY.

Its pathway is carbohydrate metabolism; D-tagatose 6-phosphate degradation; D-glyceraldehyde 3-phosphate and glycerone phosphate from D-tagatose 6-phosphate: step 2/2. In terms of biological role, component of the tagatose-1,6-bisphosphate aldolase GatYZ that is required for full activity and stability of the Y subunit. Could have a chaperone-like function for the proper and stable folding of GatY. When expressed alone, GatZ does not show any aldolase activity. Is involved in the catabolism of galactitol. The polypeptide is D-tagatose-1,6-bisphosphate aldolase subunit GatZ (Escherichia coli O17:K52:H18 (strain UMN026 / ExPEC)).